The sequence spans 187 residues: Elongation factor P (187 aa).

Belongs to the elongation factor P family.

Its subcellular location is the cytoplasm. The protein operates within protein biosynthesis; polypeptide chain elongation. In terms of biological role, involved in peptide bond synthesis. Stimulates efficient translation and peptide-bond synthesis on native or reconstituted 70S ribosomes in vitro. Probably functions indirectly by altering the affinity of the ribosome for aminoacyl-tRNA, thus increasing their reactivity as acceptors for peptidyl transferase. This Synechococcus sp. (strain CC9605) protein is Elongation factor P.